The primary structure comprises 275 residues: Nitrogenase iron protein 1 (275 aa).

Residue G9–S16 coordinates ATP. C97 contacts [4Fe-4S] cluster. Residue R100 is modified to ADP-ribosylarginine; by dinitrogenase reductase ADP-ribosyltransferase. C132 serves as a coordination point for [4Fe-4S] cluster.

It belongs to the NifH/BchL/ChlL family. In terms of assembly, homodimer. [4Fe-4S] cluster is required as a cofactor. Post-translationally, the reversible ADP-ribosylation of Arg-100 inactivates the nitrogenase reductase and regulates nitrogenase activity.

It catalyses the reaction N2 + 8 reduced [2Fe-2S]-[ferredoxin] + 16 ATP + 16 H2O = H2 + 8 oxidized [2Fe-2S]-[ferredoxin] + 2 NH4(+) + 16 ADP + 16 phosphate + 6 H(+). Functionally, the key enzymatic reactions in nitrogen fixation are catalyzed by the nitrogenase complex, which has 2 components: the iron protein and the molybdenum-iron protein. This chain is Nitrogenase iron protein 1 (nifH1), found in Methanothermobacter marburgensis (strain ATCC BAA-927 / DSM 2133 / JCM 14651 / NBRC 100331 / OCM 82 / Marburg) (Methanobacterium thermoautotrophicum).